Here is a 261-residue protein sequence, read N- to C-terminus: (R)-S-adenosyl-L-methionine hydrolase (261 aa).

D12, D72, and N187 together coordinate adenosine. Positions 187, 231, and 239 each coordinate (R)-S-adenosyl-L-methionine. Residue V239 participates in adenosine binding.

It belongs to the SAM hydrolase / SAM-dependent halogenase family.

The enzyme catalyses (R)-S-adenosyl-L-methionine + H2O = adenosine + L-methionine + H(+). Functionally, specifically hydrolyzes (R)-S-adenosyl-L-methionine ((R)-SAM), the inactive form of the ubiquitous cofactor SAM, into adenosine and L-methionine. Is stereoselective as it cannot use the active form of SAM, (S)-S-adenosyl-L-methionine, as substrate. Likely plays a role in preventing accumulation of (R)-S-adenosyl-L-methionine in cells; maintenance of (S)-S-denosyl-L-methionine homochirality is important for cellular health given that the (R)-form is largely inactive as a methyl donor and can function as an inhibitor of methyltransferases. This Salinispora tropica (strain ATCC BAA-916 / DSM 44818 / JCM 13857 / NBRC 105044 / CNB-440) protein is (R)-S-adenosyl-L-methionine hydrolase.